The chain runs to 443 residues: Probable D-serine dehydratase (443 aa).

Lysine 118 bears the N6-(pyridoxal phosphate)lysine mark.

It belongs to the serine/threonine dehydratase family. DsdA subfamily. Pyridoxal 5'-phosphate is required as a cofactor.

It catalyses the reaction D-serine = pyruvate + NH4(+). This is Probable D-serine dehydratase from Vibrio parahaemolyticus serotype O3:K6 (strain RIMD 2210633).